Here is a 313-residue protein sequence, read N- to C-terminus: Pre-mRNA-splicing factor 38A (313 aa).

Positions 1–179 (MANRTVKDAN…VLEEAELLDP (179 aa)) are N-terminal protein interaction domain. The stretch at 172-201 (EEAELLDPRISALEEDLDEVETSEEEDDED) forms a coiled coil. A disordered region spans residues 182–313 (SALEEDLDEV…SHKRSRRGNE (132 aa)). The span at 184–202 (LEEDLDEVETSEEEDDEDE) shows a compositional bias: acidic residues. Residues 203-224 (KPERMQSPEPHRRSYRDMDRPR) are compositionally biased toward basic and acidic residues. Composition is skewed to basic residues over residues 225–250 (RSPS…RSPS), 260–294 (HRSK…RSHS), and 302–313 (KKSHKRSRRGNE).

This sequence belongs to the PRP38 family. As to quaternary structure, component of the spliceosome B complex.

The protein localises to the nucleus. Its function is as follows. Involved in pre-mRNA splicing as a component of the spliceosome. The polypeptide is Pre-mRNA-splicing factor 38A (prpf38a) (Danio rerio (Zebrafish)).